The following is a 360-amino-acid chain: Aminomethyltransferase (360 aa).

It belongs to the GcvT family. In terms of assembly, the glycine cleavage system is composed of four proteins: P, T, L and H.

It catalyses the reaction N(6)-[(R)-S(8)-aminomethyldihydrolipoyl]-L-lysyl-[protein] + (6S)-5,6,7,8-tetrahydrofolate = N(6)-[(R)-dihydrolipoyl]-L-lysyl-[protein] + (6R)-5,10-methylene-5,6,7,8-tetrahydrofolate + NH4(+). Its function is as follows. The glycine cleavage system catalyzes the degradation of glycine. This chain is Aminomethyltransferase, found in Flavobacterium psychrophilum (strain ATCC 49511 / DSM 21280 / CIP 103535 / JIP02/86).